The primary structure comprises 85 residues: MAHKKGVGSTRNGRDSESKRLGCKKYGGENVKAGNIIYRQRGTQIHPGTNVGCGKDYTLFALIDGVVKFERLGRDRKKVSVYPAS.

A disordered region spans residues 1 to 22; that stretch reads MAHKKGVGSTRNGRDSESKRLG.

This sequence belongs to the bacterial ribosomal protein bL27 family.

The sequence is that of Large ribosomal subunit protein bL27 from Geobacter metallireducens (strain ATCC 53774 / DSM 7210 / GS-15).